A 734-amino-acid chain; its full sequence is Photosystem I P700 chlorophyll a apoprotein A2 (734 aa).

Transmembrane regions (helical) follow at residues 46-69, 135-158, 175-199, 273-291, 330-353, 369-395, 417-439, and 517-535; these read IFAS…FHVA, LYTG…FHLQ, LDHH…HVAI, IAHH…GHMY, LHFQ…QHMY, AALY…IFFI, AIIS…LYVH, and FLVH…LILV. Cysteine 559 and cysteine 568 together coordinate [4Fe-4S] cluster. 2 helical membrane-spanning segments follow: residues 575–596 and 643–665; these read AFYL…YWHW and LSVW…MFLI. Chlorophyll a contacts are provided by histidine 654, methionine 662, and tyrosine 670. Residue tryptophan 671 coordinates phylloquinone. The helical transmembrane segment at 707–727 threads the bilayer; it reads LVGLAHFSVGYIFTYAAFLIA.

It belongs to the PsaA/PsaB family. In terms of assembly, the PsaA/B heterodimer binds the P700 chlorophyll special pair and subsequent electron acceptors. PSI consists of a core antenna complex that captures photons, and an electron transfer chain that converts photonic excitation into a charge separation. The eukaryotic PSI reaction center is composed of at least 11 subunits. P700 is a chlorophyll a/chlorophyll a' dimer, A0 is one or more chlorophyll a, A1 is one or both phylloquinones and FX is a shared 4Fe-4S iron-sulfur center. serves as cofactor.

Its subcellular location is the plastid. The protein localises to the chloroplast thylakoid membrane. It catalyses the reaction reduced [plastocyanin] + hnu + oxidized [2Fe-2S]-[ferredoxin] = oxidized [plastocyanin] + reduced [2Fe-2S]-[ferredoxin]. PsaA and PsaB bind P700, the primary electron donor of photosystem I (PSI), as well as the electron acceptors A0, A1 and FX. PSI is a plastocyanin-ferredoxin oxidoreductase, converting photonic excitation into a charge separation, which transfers an electron from the donor P700 chlorophyll pair to the spectroscopically characterized acceptors A0, A1, FX, FA and FB in turn. Oxidized P700 is reduced on the lumenal side of the thylakoid membrane by plastocyanin. This Cycas taitungensis (Prince sago) protein is Photosystem I P700 chlorophyll a apoprotein A2.